Here is a 279-residue protein sequence, read N- to C-terminus: Biotin synthase (279 aa).

The Radical SAM core domain maps to 2–228 (KTIMLCAISS…NARIMIAGGR (227 aa)). [4Fe-4S] cluster contacts are provided by C17, C21, and C24. C61, C96, C154, and R221 together coordinate [2Fe-2S] cluster.

This sequence belongs to the radical SAM superfamily. Biotin synthase family. In terms of assembly, homodimer. Requires [4Fe-4S] cluster as cofactor. It depends on [2Fe-2S] cluster as a cofactor.

It carries out the reaction (4R,5S)-dethiobiotin + (sulfur carrier)-SH + 2 reduced [2Fe-2S]-[ferredoxin] + 2 S-adenosyl-L-methionine = (sulfur carrier)-H + biotin + 2 5'-deoxyadenosine + 2 L-methionine + 2 oxidized [2Fe-2S]-[ferredoxin]. It functions in the pathway cofactor biosynthesis; biotin biosynthesis; biotin from 7,8-diaminononanoate: step 2/2. Catalyzes the conversion of dethiobiotin (DTB) to biotin by the insertion of a sulfur atom into dethiobiotin via a radical-based mechanism. The protein is Biotin synthase of Campylobacter curvus (strain 525.92).